Consider the following 900-residue polypeptide: Alanine--tRNA ligase (900 aa).

Zn(2+) contacts are provided by His580, His584, Cys683, and His687.

This sequence belongs to the class-II aminoacyl-tRNA synthetase family. The cofactor is Zn(2+).

The protein localises to the cytoplasm. It carries out the reaction tRNA(Ala) + L-alanine + ATP = L-alanyl-tRNA(Ala) + AMP + diphosphate. In terms of biological role, catalyzes the attachment of alanine to tRNA(Ala) in a two-step reaction: alanine is first activated by ATP to form Ala-AMP and then transferred to the acceptor end of tRNA(Ala). Also edits incorrectly charged Ser-tRNA(Ala) and Gly-tRNA(Ala) via its editing domain. The sequence is that of Alanine--tRNA ligase from Mycolicibacterium paratuberculosis (strain ATCC BAA-968 / K-10) (Mycobacterium paratuberculosis).